The primary structure comprises 399 residues: Serine/threonine-protein kinase PKZ1 (399 aa).

The tract at residues 30–50 (PMQCAYQTQSHSNPEGAKRGR) is disordered. Residues 92–371 (WQLFDQIGAG…ADQMLQHPWM (280 aa)) form the Protein kinase domain. ATP contacts are provided by residues 98–106 (IGAGAFGVV) and Lys121. Asp219 acts as the Proton acceptor in catalysis.

This sequence belongs to the protein kinase superfamily. CAMK Ser/Thr protein kinase family. As to quaternary structure, interacts with BZP1.

The enzyme catalyses L-seryl-[protein] + ATP = O-phospho-L-seryl-[protein] + ADP + H(+). It carries out the reaction L-threonyl-[protein] + ATP = O-phospho-L-threonyl-[protein] + ADP + H(+). In terms of biological role, may regulate an early stage of the zoospore pathway. The protein is Serine/threonine-protein kinase PKZ1 of Phytophthora infestans (Potato late blight agent).